A 41-amino-acid polypeptide reads, in one-letter code: Large ribosomal subunit protein bL36 (41 aa).

This sequence belongs to the bacterial ribosomal protein bL36 family.

This is Large ribosomal subunit protein bL36 from Gluconobacter oxydans (strain 621H) (Gluconobacter suboxydans).